Reading from the N-terminus, the 60-residue chain is Large ribosomal subunit protein uL30 (60 aa).

This sequence belongs to the universal ribosomal protein uL30 family. In terms of assembly, part of the 50S ribosomal subunit.

This is Large ribosomal subunit protein uL30 from Ralstonia pickettii (strain 12J).